The sequence spans 198 residues: Recombination protein RecR (198 aa).

The segment at 57 to 72 (CSICGNLTESDPCAIC) adopts a C4-type zinc-finger fold. Residues 80 to 175 (TTILVVEESK…KVTRLARGLA (96 aa)) form the Toprim domain.

It belongs to the RecR family.

Its function is as follows. May play a role in DNA repair. It seems to be involved in an RecBC-independent recombinational process of DNA repair. It may act with RecF and RecO. The sequence is that of Recombination protein RecR from Lactococcus lactis subsp. cremoris (strain MG1363).